The primary structure comprises 272 residues: R3H domain-containing protein 4 (272 aa).

Residues 141–167 (LEDEGKSKARRRGPTRGEDRRREDPAY) are disordered. Positions 155 to 165 (TRGEDRRREDP) are enriched in basic and acidic residues. The region spanning 191-254 (METLETWEER…KRQMKVSNRH (64 aa)) is the R3H domain.

The protein resides in the nucleus. In Bos taurus (Bovine), this protein is R3H domain-containing protein 4 (R3HDM4).